Reading from the N-terminus, the 391-residue chain is Phosphoglycerate kinase (391 aa).

Residues 21 to 23, Arg-36, 59 to 62, Arg-113, and Arg-146 contribute to the substrate site; these read DLN and HLGR. Residues Lys-197, Glu-319, and 345-348 each bind ATP; that span reads GGDT.

It belongs to the phosphoglycerate kinase family. In terms of assembly, monomer.

Its subcellular location is the cytoplasm. The enzyme catalyses (2R)-3-phosphoglycerate + ATP = (2R)-3-phospho-glyceroyl phosphate + ADP. It functions in the pathway carbohydrate degradation; glycolysis; pyruvate from D-glyceraldehyde 3-phosphate: step 2/5. The sequence is that of Phosphoglycerate kinase from Shewanella sp. (strain MR-4).